The chain runs to 321 residues: Glucokinase (321 aa).

8–13 (GDVGGT) is a binding site for ATP.

This sequence belongs to the bacterial glucokinase family.

The protein localises to the cytoplasm. The enzyme catalyses D-glucose + ATP = D-glucose 6-phosphate + ADP + H(+). The chain is Glucokinase from Shigella flexneri serotype 5b (strain 8401).